A 173-amino-acid chain; its full sequence is MSQTTESPMKKISLEKVVLNMGVGKSGDVIEIASRALEQISGKKPSARNAKETQRDWGVRKGEPIGVAVTIRGDDAKALLKRLLEAKGNTVNGRAFDNFGNYSFGIREHIDIPGVKYEPSIGILGLGISVTLTRPGYGIRTRSKHKASVGKSHIITSQEAKDYLVKEFGVTVA.

Belongs to the universal ribosomal protein uL5 family. As to quaternary structure, part of the 50S ribosomal subunit; contacts the 5S rRNA and probably tRNA. Forms a bridge to the 30S subunit in the 70S ribosome.

In terms of biological role, this is one of the proteins that bind and probably mediate the attachment of the 5S RNA into the large ribosomal subunit, where it forms part of the central protuberance. In the 70S ribosome it contacts protein S13 of the 30S subunit (bridge B1b), connecting the 2 subunits; this bridge is implicated in subunit movement. May contact the P site tRNA; the 5S rRNA and some of its associated proteins might help stabilize positioning of ribosome-bound tRNAs. In Nitrosopumilus maritimus (strain SCM1), this protein is Large ribosomal subunit protein uL5.